The chain runs to 185 residues: Ribosome-recycling factor (185 aa).

A disordered region spans residues 138–185 (ALKKQEKDGEITEDEERRLEKEVQKVTDESTKKIDQMADNKRKEIIQG).

Belongs to the RRF family.

It localises to the cytoplasm. Its function is as follows. Responsible for the release of ribosomes from messenger RNA at the termination of protein biosynthesis. May increase the efficiency of translation by recycling ribosomes from one round of translation to another. The protein is Ribosome-recycling factor of Lactobacillus delbrueckii subsp. bulgaricus (strain ATCC 11842 / DSM 20081 / BCRC 10696 / JCM 1002 / NBRC 13953 / NCIMB 11778 / NCTC 12712 / WDCM 00102 / Lb 14).